Consider the following 151-residue polypeptide: Large-conductance mechanosensitive channel (151 aa).

2 helical membrane-spanning segments follow: residues 12–32 and 71–91; these read GNIVDLAVAVVIGTAFTALVT and VLLSAAINFFLIAFAVYFLVV. The interval 122–151 is disordered; it reads AQTNGDSPGRHGGRGTPSPTDGPRASTESQ.

This sequence belongs to the MscL family. In terms of assembly, homopentamer.

The protein localises to the cell membrane. Functionally, channel that opens in response to stretch forces in the membrane lipid bilayer. May participate in the regulation of osmotic pressure changes within the cell. This Mycobacterium tuberculosis (strain CDC 1551 / Oshkosh) protein is Large-conductance mechanosensitive channel.